A 206-amino-acid chain; its full sequence is MTHSTGTLYIISAPSGAGKSSLVKALTDAKPEIRVSVSHTTRAMRPGEVDGVNYHFVSRETFVKMGEHGDFLERAEVFGNLYGTSQSHLQQTLDAGHDLILEIDWQGAEQVRKLMPQARSIFILPPSLQALHQRLTNRGQDSDEVIDGRMREAVSEMSHYVDYDYLIINDDFAHALGDLKAIFRANQLQQKRQQQRFGKLLAELLG.

A Guanylate kinase-like domain is found at 6 to 184; it reads GTLYIISAPS…ALGDLKAIFR (179 aa). 13–20 is a binding site for ATP; it reads APSGAGKS.

This sequence belongs to the guanylate kinase family.

It is found in the cytoplasm. The catalysed reaction is GMP + ATP = GDP + ADP. Its function is as follows. Essential for recycling GMP and indirectly, cGMP. This Pseudomonas fluorescens (strain ATCC BAA-477 / NRRL B-23932 / Pf-5) protein is Guanylate kinase.